Reading from the N-terminus, the 284-residue chain is RNA polymerase sigma factor RpoH (284 aa).

Positions 53 to 122 (LILSHLRFVV…IHEYVLRNWR (70 aa)) are sigma-70 factor domain-2. The short motif at 77 to 80 (DLIQ) is the Interaction with polymerase core subunit RpoC element. Positions 228–280 (AMQGLDERSQDIIRARWLDEDNKSTLQELADRYGVSAERVRQLEKNAMKKLRA) are sigma-70 factor domain-4. Residues 253-272 (LQELADRYGVSAERVRQLEK) constitute a DNA-binding region (H-T-H motif).

It belongs to the sigma-70 factor family. RpoH subfamily. Interacts with the RNA polymerase core enzyme.

It is found in the cytoplasm. Functionally, sigma factors are initiation factors that promote the attachment of RNA polymerase to specific initiation sites and are then released. This sigma factor is involved in regulation of expression of heat shock genes. In Escherichia coli O6:H1 (strain CFT073 / ATCC 700928 / UPEC), this protein is RNA polymerase sigma factor RpoH.